Consider the following 151-residue polypeptide: Conidium-specific protein (151 aa).

The disordered stretch occupies residues 1–72; it reads MAKPHCSSRS…FSGDPDSEVE (72 aa). Over residues 48–60 the composition is skewed to basic and acidic residues; it reads RKDNSADKGDTLR.

The protein is Conidium-specific protein (SpoC1-C1D) of Emericella nidulans (strain FGSC A4 / ATCC 38163 / CBS 112.46 / NRRL 194 / M139) (Aspergillus nidulans).